Reading from the N-terminus, the 256-residue chain is Thiazole synthase (256 aa).

The Schiff-base intermediate with DXP role is filled by Lys-95. Residues Gly-156, 182–183, and 204–205 contribute to the 1-deoxy-D-xylulose 5-phosphate site; these read AG and NT.

Belongs to the ThiG family. In terms of assembly, homotetramer. Forms heterodimers with either ThiH or ThiS.

The protein resides in the cytoplasm. The enzyme catalyses [ThiS sulfur-carrier protein]-C-terminal-Gly-aminoethanethioate + 2-iminoacetate + 1-deoxy-D-xylulose 5-phosphate = [ThiS sulfur-carrier protein]-C-terminal Gly-Gly + 2-[(2R,5Z)-2-carboxy-4-methylthiazol-5(2H)-ylidene]ethyl phosphate + 2 H2O + H(+). It functions in the pathway cofactor biosynthesis; thiamine diphosphate biosynthesis. Functionally, catalyzes the rearrangement of 1-deoxy-D-xylulose 5-phosphate (DXP) to produce the thiazole phosphate moiety of thiamine. Sulfur is provided by the thiocarboxylate moiety of the carrier protein ThiS. In vitro, sulfur can be provided by H(2)S. This chain is Thiazole synthase, found in Escherichia coli O17:K52:H18 (strain UMN026 / ExPEC).